We begin with the raw amino-acid sequence, 525 residues long: Mitochondrial-processing peptidase subunit alpha (525 aa).

Residues 1–33 constitute a mitochondrion transit peptide; it reads MAAVVLAATRLLRGSGSWGCSRLRFGPPAYRRF. Lysine 64 bears the N6-succinyllysine mark. An N6-acetyllysine modification is found at lysine 299.

This sequence belongs to the peptidase M16 family. In terms of assembly, heterodimer of PMPCA (alpha) and PMPCB (beta) subunits, forming the mitochondrial processing protease (MPP) in which PMPCA is involved in substrate recognition and binding and PMPCB is the catalytic subunit.

The protein resides in the mitochondrion matrix. Its subcellular location is the mitochondrion inner membrane. Its function is as follows. Substrate recognition and binding subunit of the essential mitochondrial processing protease (MPP), which cleaves the mitochondrial sequence off newly imported precursors proteins. The sequence is that of Mitochondrial-processing peptidase subunit alpha (PMPCA) from Pongo abelii (Sumatran orangutan).